A 262-amino-acid chain; its full sequence is MPVTLSTLKALRQKGEKIAVLTCYDASFARVFDAAGVDVLLVGDSLGMVIQGHASTLPVKLAEMAYHTRCVAAGTTRAFIVADLPFGSYQPSPERAYTAAARLMAAGAHMIKLEGGAVMVDTVAFLAARGIPVCAHLGLLPQSVNQLGGYRVQGREDGDAAQLVADARALEAAGAGLIVLEMVPAALAKTVTAALSMPTIGIGAGADCAGQVLVSYDMLGLYPRAPKFSKNFLAGAGSVDAAVRAYVAAVKDGSFPAAEHAF.

Mg(2+)-binding residues include aspartate 44 and aspartate 83. Residues 44-45 (DS), aspartate 83, and lysine 112 each bind 3-methyl-2-oxobutanoate. Glutamate 114 contributes to the Mg(2+) binding site. Glutamate 181 acts as the Proton acceptor in catalysis.

The protein belongs to the PanB family. Homodecamer; pentamer of dimers. Mg(2+) serves as cofactor.

The protein resides in the cytoplasm. It catalyses the reaction 3-methyl-2-oxobutanoate + (6R)-5,10-methylene-5,6,7,8-tetrahydrofolate + H2O = 2-dehydropantoate + (6S)-5,6,7,8-tetrahydrofolate. It participates in cofactor biosynthesis; (R)-pantothenate biosynthesis; (R)-pantoate from 3-methyl-2-oxobutanoate: step 1/2. Functionally, catalyzes the reversible reaction in which hydroxymethyl group from 5,10-methylenetetrahydrofolate is transferred onto alpha-ketoisovalerate to form ketopantoate. In Thiobacillus denitrificans (strain ATCC 25259 / T1), this protein is 3-methyl-2-oxobutanoate hydroxymethyltransferase.